An 889-amino-acid polypeptide reads, in one-letter code: Oxysterol-binding protein-related protein 8 (889 aa).

The residue at position 1 (methionine 1) is an N-acetylmethionine. A disordered region spans residues 1–129; the sequence is MEAALADGEP…SLKVQKKNYR (129 aa). 3 positions are modified to phosphoserine: serine 14, serine 65, and serine 68. Polar residues predominate over residues 62–71; it reads PSLSPASLHS. Basic and acidic residues-rich tracts occupy residues 73-88, 95-109, and 116-129; these read GFER…KDDS, SKSE…EKDS, and TKKE…KNYR. A PH domain is found at 148–265; it reads VIVMADWLKI…WMDALELALK (118 aa). Serine 314, serine 328, and serine 342 each carry phosphoserine. Basic and acidic residues predominate over residues 321-336; it reads FKDQDLYSDKSDKEND. The segment at 321–374 is disordered; sequence FKDQDLYSDKSDKENDPEHDESDNEVLGKSEESDTDTSERQDDSYIDPEPVEPL. A compositionally biased stretch (basic and acidic residues) spans 346–363; it reads VLGKSEESDTDTSERQDD. A 1,2-diacyl-sn-glycero-3-phospho-(1D-myo-inositol 4-phosphate) contacts are provided by residues 420-425, 482-485, and 514-515; these read LSRVVL, KPYN, and HH. A 1,2-diacyl-sn-glycero-3-phospho-L-serine-binding positions include 420–425 and asparagine 485; that span reads LSRVVL. Serine 540 contacts a 1,2-diacyl-sn-glycero-3-phospho-L-serine. A 1,2-diacyl-sn-glycero-3-phospho-(1D-myo-inositol 4-phosphate) contacts are provided by lysine 706, glutamate 710, and arginine 714. The segment at 772 to 823 is disordered; it reads HRTPMVSVPKMKHKPTRQQKKVVKGYSSPEPDIQDSSGSEAQSVKPSTRRKK. Residues 781–794 are compositionally biased toward basic residues; it reads KMKHKPTRQQKKVV. Residues 805–817 show a composition bias toward polar residues; sequence QDSSGSEAQSVKP. Serine 807, serine 808, serine 810, and serine 814 each carry phosphoserine. The helical transmembrane segment at 871-888 threads the bilayer; sequence YFVIFLLILLQVIINFIF.

This sequence belongs to the OSBP family. Interacts with SPAG5. Interacts with NUP62. In terms of tissue distribution, widely expressed. Most abundant in liver, spleen, kidney, brain and adipose tissue.

It localises to the endoplasmic reticulum membrane. The protein resides in the nucleus membrane. In terms of biological role, lipid transporter involved in lipid countertransport between the endoplasmic reticulum and the plasma membrane: specifically exchanges phosphatidylserine with phosphatidylinositol 4-phosphate (PI4P), delivering phosphatidylserine to the plasma membrane in exchange for PI4P, which is degraded by the SAC1/SACM1L phosphatase in the endoplasmic reticulum. Binds phosphatidylserine and PI4P in a mutually exclusive manner. Binds oxysterol, 25-hydroxycholesterol and cholesterol. The protein is Oxysterol-binding protein-related protein 8 of Mus musculus (Mouse).